We begin with the raw amino-acid sequence, 315 residues long: Probable integrase/recombinase aq_aa09 (315 aa).

The region spanning 1 to 78 is the Core-binding (CB) domain; the sequence is MEHFIDTYLY…EVRLFYEWLQ (78 aa). The Tyr recombinase domain occupies 106-313; it reads SKKKYYSDDE…REKQLEAILE (208 aa). Active-site residues include arginine 150, lysine 186, histidine 263, arginine 266, and histidine 289. Tyrosine 299 serves as the catalytic O-(3'-phospho-DNA)-tyrosine intermediate.

It belongs to the 'phage' integrase family.

In terms of biological role, may function as an integrase. This is Probable integrase/recombinase aq_aa09 from Aquifex aeolicus (strain VF5).